Consider the following 364-residue polypeptide: DNA polymerase IV (364 aa).

The 185-residue stretch at 14–198 (IIHIDMDAFF…LPIEKFHGVG (185 aa)) folds into the UmuC domain. Mg(2+) contacts are provided by Asp-18 and Asp-116. Residue Glu-117 is part of the active site.

This sequence belongs to the DNA polymerase type-Y family. Monomer. The cofactor is Mg(2+).

The protein resides in the cytoplasm. The catalysed reaction is DNA(n) + a 2'-deoxyribonucleoside 5'-triphosphate = DNA(n+1) + diphosphate. Poorly processive, error-prone DNA polymerase involved in untargeted mutagenesis. Copies undamaged DNA at stalled replication forks, which arise in vivo from mismatched or misaligned primer ends. These misaligned primers can be extended by PolIV. Exhibits no 3'-5' exonuclease (proofreading) activity. May be involved in translesional synthesis, in conjunction with the beta clamp from PolIII. This chain is DNA polymerase IV, found in Streptococcus pyogenes serotype M2 (strain MGAS10270).